Reading from the N-terminus, the 541-residue chain is 2-isopropylmalate synthase (541 aa).

Residues 8–284 form the Pyruvate carboxyltransferase domain; the sequence is VIIFDTTLRD…LTNINTRHIY (277 aa). Mn(2+) contacts are provided by Asp17, His208, His210, and Asn244. Residues 408–541 form a regulatory domain region; sequence RLELVQVSCG…DQPTEVVAGS (134 aa).

The protein belongs to the alpha-IPM synthase/homocitrate synthase family. LeuA type 1 subfamily. Homodimer. The cofactor is Mn(2+).

The protein localises to the cytoplasm. The catalysed reaction is 3-methyl-2-oxobutanoate + acetyl-CoA + H2O = (2S)-2-isopropylmalate + CoA + H(+). The protein operates within amino-acid biosynthesis; L-leucine biosynthesis; L-leucine from 3-methyl-2-oxobutanoate: step 1/4. Its function is as follows. Catalyzes the condensation of the acetyl group of acetyl-CoA with 3-methyl-2-oxobutanoate (2-ketoisovalerate) to form 3-carboxy-3-hydroxy-4-methylpentanoate (2-isopropylmalate). This Trichodesmium erythraeum (strain IMS101) protein is 2-isopropylmalate synthase.